Reading from the N-terminus, the 775-residue chain is Endothelin-converting enzyme-like 1 (775 aa).

Residues 1 to 61 are Cytoplasmic-facing; the sequence is MEAPYSMTAH…LPRWNRREVC (61 aa). The tract at residues 23–51 is disordered; the sequence is CGTGGARGTSLPPGFPRSSGRSASGARSG. Positions 32–51 are enriched in low complexity; sequence SLPPGFPRSSGRSASGARSG. Residues 62 to 82 traverse the membrane as a helical; Signal-anchor for type II membrane protein segment; it reads LLSGLVFAAGLCAILAAMLAL. Residues 83–775 are Lumenal-facing; sequence KYLGPGAAGT…MNPVHKCSVW (693 aa). Positions 99–775 constitute a Peptidase M13 domain; sequence GCPERKAFAR…MNPVHKCSVW (677 aa). 4 cysteine pairs are disulfide-bonded: Cys-124-Cys-760, Cys-132-Cys-720, Cys-188-Cys-441, and Cys-649-Cys-772. 2 N-linked (GlcNAc...) asparagine glycosylation sites follow: Asn-255 and Asn-322. His-612 contributes to the Zn(2+) binding site. Glu-613 is an active-site residue. His-616 lines the Zn(2+) pocket. Asn-656 carries N-linked (GlcNAc...) asparagine glycosylation. Glu-672 is a binding site for Zn(2+). The active-site Proton donor is the Asp-676.

The protein belongs to the peptidase M13 family. Requires Zn(2+) as cofactor. Highly expressed in the CNS, in particular in neurons of the caudate putamen, diagonal band, the paraventricular nucleus of the thalamus, part of the hypothalamus, in cranial motor nuclei, inferior olive, and substantia gelatinosa of the spinal tract trigeminal nucleus. Not detected in cerebral cortex, hippocampus and cerebellum.

The protein resides in the membrane. Its function is as follows. May contribute to the degradation of peptide hormones and be involved in the inactivation of neuronal peptides. Cleaves the synthetic substrate Z-Gly-Gly-Leu-pNA and releases pNA. May protect against C2-ceramide-induced apoptosis. The sequence is that of Endothelin-converting enzyme-like 1 (Ecel1) from Rattus norvegicus (Rat).